Reading from the N-terminus, the 188-residue chain is Putative adenylate kinase (188 aa).

G10, G12, K13, S14, and T15 together coordinate ATP. The interval 30 to 53 (HVSSFLIQNKAFSEYDELRQSYVI) is NMP. Residues 103–113 (RRGWGELKIAE) are LID. R104 and K142 together coordinate ATP.

This sequence belongs to the adenylate kinase family. AK6 subfamily. In terms of assembly, interacts with uS11. Not a structural component of 40S pre-ribosomes, but transiently interacts with them by binding to uS11.

The enzyme catalyses AMP + ATP = 2 ADP. It carries out the reaction ATP + H2O = ADP + phosphate + H(+). In terms of biological role, broad-specificity nucleoside monophosphate (NMP) kinase that catalyzes the reversible transfer of the terminal phosphate group between nucleoside triphosphates and monophosphates. Also has ATPase activity. Involved in the late maturation steps of the 30S ribosomal particles, specifically 16S rRNA maturation. While NMP activity is not required for ribosome maturation, ATPase activity is. Associates transiently with small ribosomal subunit protein uS11. ATP hydrolysis breaks the interaction with uS11. May temporarily remove uS11 from the ribosome to enable a conformational change of the ribosomal RNA that is needed for the final maturation step of the small ribosomal subunit. This Sulfurisphaera tokodaii (strain DSM 16993 / JCM 10545 / NBRC 100140 / 7) (Sulfolobus tokodaii) protein is Putative adenylate kinase.